Consider the following 247-residue polypeptide: ATP synthase subunit a, chloroplastic (247 aa).

A run of 5 helical transmembrane segments spans residues 38 to 58 (QVLITSWVVIAILLGSATIAV), 95 to 115 (VPFIGTMFLFIFVSNWSGALL), 134 to 154 (INTTVALALLTSVAYFYAGLT), 199 to 219 (LVVVVLVSLVPSVVPIPVMFL), and 220 to 240 (GLFTSGIQALIFATLAAAYIG).

The protein belongs to the ATPase A chain family. As to quaternary structure, F-type ATPases have 2 components, CF(1) - the catalytic core - and CF(0) - the membrane proton channel. CF(1) has five subunits: alpha(3), beta(3), gamma(1), delta(1), epsilon(1). CF(0) has four main subunits: a, b, b' and c.

Its subcellular location is the plastid. The protein localises to the chloroplast thylakoid membrane. Key component of the proton channel; it plays a direct role in the translocation of protons across the membrane. This is ATP synthase subunit a, chloroplastic from Panax ginseng (Korean ginseng).